Consider the following 327-residue polypeptide: 2-methoxy-6-polyprenyl-1,4-benzoquinol methylase, mitochondrial (327 aa).

Residues 1–49 (MAAPRCCVLWRVCGRGWWRATGHCRLPGCHRSWPWATLGTRSLSQEKRA) constitute a mitochondrion transit peptide. Residues T117, D171, and 199-200 (DA) each bind S-adenosyl-L-methionine.

Belongs to the class I-like SAM-binding methyltransferase superfamily. MenG/UbiE family. Component of a multi-subunit COQ enzyme complex, composed of at least COQ3, COQ4, COQ5, COQ6, COQ7 and COQ9. Interacts with PYURF; the interaction is direct, stabilizes COQ5 protein and associates PYURF with COQ enzyme complex.

It is found in the mitochondrion inner membrane. The catalysed reaction is 2-methoxy-6-(all-trans-decaprenyl)benzene-1,4-diol + S-adenosyl-L-methionine = 5-methoxy-2-methyl-3-(all-trans-decaprenyl)benzene-1,4-diol + S-adenosyl-L-homocysteine + H(+). Its pathway is cofactor biosynthesis; ubiquinone biosynthesis. In terms of biological role, methyltransferase required for the conversion of 2-decaprenyl-6-methoxy-1,4-benzoquinol (DDMQH2) to 2-decaprenyl-3-methyl-6-methoxy-1,4-benzoquinol (DMQH2). This chain is 2-methoxy-6-polyprenyl-1,4-benzoquinol methylase, mitochondrial, found in Mus musculus (Mouse).